The sequence spans 615 residues: Dehydrogenase str4 (615 aa).

Residues 45–46 (TA), 66–67 (EA), and 123–126 (NGSM) contribute to the FAD site. His-552 functions as the Proton acceptor in the catalytic mechanism. FAD contacts are provided by residues Ala-585 and 596-597 (PA).

Belongs to the GMC oxidoreductase family. In terms of assembly, homodimer. The cofactor is FAD.

The protein operates within mycotoxin biosynthesis. Functionally, dehydrogenase; part of the gene cluster that mediates the biosynthesis of strobilurin A, an antifungal polyketide that contains a key beta-methoxyacrylate toxophore that targets the complex III of the mitochondrial electron transport chain. Strobilurin biosynthesis begins with construction of benzoyl CoA by step-wise elimination of ammonia from phenylalanine by the phenylalanine ammonia-lyase str11, oxygenation by str8 and retro-Claisen reaction to form benzoic acid, which is activated to its CoA thiolester benzoyl CoA by the dedicated CoA ligase str10. Benzoyl CoA forms the starter unit for the highly reducing polyketide synthase stpks1 that produces the polyketide prestrobilutin A. The FAD-dependent oxygenase str9 then catalyzes the key oxidative rearrangement responsible for the creation of the beta-methoxyacrylate toxophore. Str9 performs epoxidation of the 2,3 olefin of prestrobilutin A, followed by Meinwald rearrangement to furnish the aldehyde intermediate. Rapid enolization of the aldehyde intermediate would give the beta-methoxyacrylate skeleton and methylations catalyzed by str2 and str3 complete the synthesis and lead to the production of strobilurin A. The short-chain dehydrogenase stl2 and the dehydrogenase str4 play a role in the shunt pathway leading to the production of bolineol. The cluster encodes no obvious halogenase gene that could be involved in production of strobilurin B, nor any obvious dimethylallyl-transferase that could be involved in the production of strobilurin G. It is possible that unknown proteins encoded in, or near, the cluster (such as str1 or stl1) may form new classes of halogenases or dimethylally-transferases, or that the responsible genes are located elsewhere on the genome. Similarly, proteins encoded by str5/str6 hydrolases appear to have no chemical role in the biosynthesis of strobilurin A. Finally, no obvious self-resistance gene is found within the cluster. This Strobilurus tenacellus protein is Dehydrogenase str4.